Reading from the N-terminus, the 208-residue chain is Uracil phosphoribosyltransferase (208 aa).

5-phospho-alpha-D-ribose 1-diphosphate-binding positions include Arg77, Arg102, and 129–137; that span reads DPMLATGNS. Residues Ile193 and 198-200 each bind uracil; that span reads GDA. Asp199 contacts 5-phospho-alpha-D-ribose 1-diphosphate.

The protein belongs to the UPRTase family. The cofactor is Mg(2+).

It catalyses the reaction UMP + diphosphate = 5-phospho-alpha-D-ribose 1-diphosphate + uracil. It participates in pyrimidine metabolism; UMP biosynthesis via salvage pathway; UMP from uracil: step 1/1. Its activity is regulated as follows. Allosterically activated by GTP. Its function is as follows. Catalyzes the conversion of uracil and 5-phospho-alpha-D-ribose 1-diphosphate (PRPP) to UMP and diphosphate. The chain is Uracil phosphoribosyltransferase from Mycoplasmopsis agalactiae (strain NCTC 10123 / CIP 59.7 / PG2) (Mycoplasma agalactiae).